Here is an 86-residue protein sequence, read N- to C-terminus: MDAFDVIKTPIVSEKTMKLIEEENRLVFYVERKATKADISAAIKELFDAEVADINTSITPKGKKKAYITLKAEYNAGEVAASLGIY.

The protein belongs to the universal ribosomal protein uL23 family. Part of the 50S ribosomal subunit. Contacts protein L29.

In terms of biological role, binds to 23S rRNA. One of the proteins that surrounds the polypeptide exit tunnel on the outside of the ribosome. This Methanococcus maripaludis (strain C6 / ATCC BAA-1332) protein is Large ribosomal subunit protein uL23.